The primary structure comprises 567 residues: Urease subunit alpha (567 aa).

One can recognise a Urease domain in the interval 129–567; that stretch reads GGIDAHIHFI…LPLTQRYCLF (439 aa). Ni(2+) is bound by residues histidine 134, histidine 136, and lysine 217. Lysine 217 carries the post-translational modification N6-carboxylysine. Histidine 219 is a binding site for substrate. The Ni(2+) site is built by histidine 246 and histidine 272. Histidine 320 acts as the Proton donor in catalysis. Ni(2+) is bound at residue aspartate 360.

The protein belongs to the metallo-dependent hydrolases superfamily. Urease alpha subunit family. Heterotrimer of UreA (gamma), UreB (beta) and UreC (alpha) subunits. Three heterotrimers associate to form the active enzyme. It depends on Ni cation as a cofactor. Carboxylation allows a single lysine to coordinate two nickel ions.

The protein resides in the cytoplasm. The enzyme catalyses urea + 2 H2O + H(+) = hydrogencarbonate + 2 NH4(+). Its pathway is nitrogen metabolism; urea degradation; CO(2) and NH(3) from urea (urease route): step 1/1. The sequence is that of Urease subunit alpha from Psychromonas ingrahamii (strain DSM 17664 / CCUG 51855 / 37).